A 199-amino-acid polypeptide reads, in one-letter code: RNA-free ribonuclease P (199 aa).

The protein belongs to the HARP family.

It catalyses the reaction Endonucleolytic cleavage of RNA, removing 5'-extranucleotides from tRNA precursor.. RNA-free RNase P that catalyzes the removal of the 5'-leader sequence from pre-tRNA to produce the mature 5'-terminus. The polypeptide is RNA-free ribonuclease P (Pyrococcus furiosus (strain ATCC 43587 / DSM 3638 / JCM 8422 / Vc1)).